A 531-amino-acid polypeptide reads, in one-letter code: RCC1 and BTB domain-containing protein 1 (531 aa).

RCC1 repeat units follow at residues 40-91 (NDEV…LLTT), 93-145 (DGVV…ALAA), 147-198 (GELF…AVLD), 199-250 (SGEV…ALTD), 252-302 (GLLY…AAKT), and 304-356 (GGHV…FLTV). BTB domains follow at residues 370 to 437 (ADLK…DLPP) and 470 to 499 (ENAFSLFSAAVRYDAEDLEEFCFKFCINHL).

In the retina, mainly expressed in the inner retina with strong signals reaching up to the outer plexiform layer (at protein level).

The protein localises to the nucleus. Its function is as follows. May be involved in cell cycle regulation by chromatin remodeling. In Mus musculus (Mouse), this protein is RCC1 and BTB domain-containing protein 1 (Rcbtb1).